Reading from the N-terminus, the 328-residue chain is UPF0252 protein PF0978 (328 aa).

A helical transmembrane segment spans residues 3-23 (VPLLILLFLVLTSGCIAPSTP).

Belongs to the UPF0252 family.

The protein localises to the membrane. The sequence is that of UPF0252 protein PF0978 from Pyrococcus furiosus (strain ATCC 43587 / DSM 3638 / JCM 8422 / Vc1).